The chain runs to 579 residues: MSILNEPQGAAAAEDSYENELPVRRKQPGNVVVKWLTTTDHKTIGTLYLVTSFAFFCIGGVMALLMRAELARPGMQIMSSEQFNQAFTMHGTIMLLMFATPLFAGFANWIMPLQIGAPDVAFPRLNMFAYWLYLFGSLIAVGGFLTPQGAADFGWFAYSPLSDAVRSPGIGADMWIMGLAFSGFGTILGSVNFITTIICMRAPGMTMFRMPIFVWNVLLTGVLVLLAFPVLAAALFALEADRKFGAHVFDAANGGALLWQHLFWFFGHPEVYIIALPFFGIISEVIPVFSRKPMFGYMGLIGATIAIAGLSVTVWAHHMYVTGGVLLPFFSFMTFLIAVPTGVKFFNWIGTMWKGSLSFETPMLWATGFLITFTFGGLTGVILASPPMDFHVSDSYFVVAHFHYVVFGTVVFAMFSGFHYWWPKFTGKMLDERLGKITFWTLFVGFHGTFLIQHWLGAEGMPRRYADYLAADGFTALNTISTICSFLLGLSILPFLYNVWKTAKYGKPVGVDDPWGYGRSLEWATSCPPPRHNFLTLPRIRSESPAFDLHHPEIAALDQLENAGHGEKAAVAGGKEAGK.

Positions 1–21 are disordered; sequence MSILNEPQGAAAAEDSYENEL. Residues 44 to 64 form a helical membrane-spanning segment; sequence IGTLYLVTSFAFFCIGGVMAL. H90 serves as a coordination point for Fe(II)-heme a. The next 6 membrane-spanning stretches (helical) occupy residues 93-113, 125-145, 174-194, 217-237, 262-282, and 295-315; these read IMLLMFATPLFAGFANWIMPL, LNMFAYWLYLFGSLIAVGGFL, MWIMGLAFSGFGTILGSVNFI, VLLTGVLVLLAFPVLAAALFA, LFWFFGHPEVYIIALPFFGII, and FGYMGLIGATIAIAGLSVTVW. H268 and Y272 together coordinate Cu cation. A cross-link (1'-histidyl-3'-tyrosine (His-Tyr)) is located at residues 268 to 272; it reads HPEVY. Cu cation is bound by residues H317 and H318. The next 5 helical transmembrane spans lie at 319-339, 363-383, 397-417, 437-457, and 480-500; these read MYVTGGVLLPFFSFMTFLIAV, MLWATGFLITFTFGGLTGVIL, FVVAHFHYVVFGTVVFAMFSG, ITFWTLFVGFHGTFLIQHWLG, and ISTICSFLLGLSILPFLYNVW. H401 is a heme a3 binding site. H403 is a Fe(II)-heme a binding site.

This sequence belongs to the heme-copper respiratory oxidase family. In terms of assembly, associates with subunits II, III and IV to form cytochrome c oxidase. The cofactor is Cu(2+). Heme is required as a cofactor.

It is found in the cell membrane. The catalysed reaction is 4 Fe(II)-[cytochrome c] + O2 + 8 H(+)(in) = 4 Fe(III)-[cytochrome c] + 2 H2O + 4 H(+)(out). Its pathway is energy metabolism; oxidative phosphorylation. Functionally, cytochrome c oxidase is the component of the respiratory chain that catalyzes the reduction of oxygen to water. Subunits 1-3 form the functional core of the enzyme complex. CO I is the catalytic subunit of the enzyme. Electrons originating in cytochrome c are transferred via the copper A center of subunit 2 and heme A of subunit 1 to the bimetallic center formed by heme A3 and copper B. This Streptomyces avermitilis (strain ATCC 31267 / DSM 46492 / JCM 5070 / NBRC 14893 / NCIMB 12804 / NRRL 8165 / MA-4680) protein is Probable cytochrome c oxidase subunit 1-alpha (ctaD1).